The chain runs to 187 residues: Large ribosomal subunit protein uL6 (187 aa).

This sequence belongs to the universal ribosomal protein uL6 family. Part of the 50S ribosomal subunit.

Its function is as follows. This protein binds to the 23S rRNA, and is important in its secondary structure. It is located near the subunit interface in the base of the L7/L12 stalk, and near the tRNA binding site of the peptidyltransferase center. This chain is Large ribosomal subunit protein uL6, found in Roseiflexus sp. (strain RS-1).